A 178-amino-acid polypeptide reads, in one-letter code: Ribosome maturation factor RimP (178 aa).

It belongs to the RimP family.

It is found in the cytoplasm. In terms of biological role, required for maturation of 30S ribosomal subunits. The polypeptide is Ribosome maturation factor RimP (Streptococcus pyogenes serotype M5 (strain Manfredo)).